The sequence spans 156 residues: MRVSILAVGRLRTGPEKSLIDDYLTRFDRTGRALGLGPARVVEVEDKKNAGMGAEAALLRKALPAGAVLCTLDERGKQLSSPDFADRMAGWRDTGRQDLALVIGGADGIDPSLRAEADFSISFGAMVWPHMLVRVMLAEQLYRAATILAGSPYHRV.

Residues Leu-72, Gly-104, and Phe-123–Trp-128 contribute to the S-adenosyl-L-methionine site.

Belongs to the RNA methyltransferase RlmH family. As to quaternary structure, homodimer.

It is found in the cytoplasm. It catalyses the reaction pseudouridine(1915) in 23S rRNA + S-adenosyl-L-methionine = N(3)-methylpseudouridine(1915) in 23S rRNA + S-adenosyl-L-homocysteine + H(+). In terms of biological role, specifically methylates the pseudouridine at position 1915 (m3Psi1915) in 23S rRNA. This is Ribosomal RNA large subunit methyltransferase H from Ruegeria pomeroyi (strain ATCC 700808 / DSM 15171 / DSS-3) (Silicibacter pomeroyi).